The chain runs to 217 residues: Small ribosomal subunit protein uS3c (217 aa).

The 72-residue stretch at 46-117 (VQKHIKNSSN…RLRMTLIEIA (72 aa)) folds into the KH type-2 domain.

This sequence belongs to the universal ribosomal protein uS3 family. Part of the 30S ribosomal subunit.

The protein localises to the plastid. It localises to the chloroplast. The sequence is that of Small ribosomal subunit protein uS3c (rps3) from Marchantia polymorpha (Common liverwort).